Reading from the N-terminus, the 429-residue chain is MSSVVVVGTQWGDEGKGKITDFLSEHAEVVARYQGGNNAGHTIVFGGVKYKLHLIPSGIFYKEKICVIGNGLVVDPKALLEELKYLHDRGVSTDNLRVSNRAHVILPYHLKQDELEEASKGDDKIGTTKKGIGPAYMDKAARIGIRMADLLDREAFKEKLERNLAQKNRLFEKMYDTEGFSVEEIFEEYFEYGQQIAQYVCDTSVVLNDALDNNHRVLFEGAQGVMLDIDHGTYPFVTSSNPIAGGVTVGTGVGPAKVTRVVGVCKAYTSRVGDGPFPTELHDEIGHQIREVGREYGTTTGRPRRVGWFDSVVVRHARRVSGLTDLSLNSIDVLTGIPTLKICVAYKCDGKVIDEVPANLNILAKCEPVYEELPGWTEDITGVRSLDELPENARKYVERVSELTGIQLSMFSVGPDRNQTNIVRNVYEA.

GTP is bound by residues 12–18 and 40–42; these read GDEGKGK and GHT. Catalysis depends on D13, which acts as the Proton acceptor. D13 and G40 together coordinate Mg(2+). IMP-binding positions include 13–16, 38–41, T128, R142, Q223, T238, and R302; these read DEGK and NAGH. H41 (proton donor) is an active-site residue. A substrate-binding site is contributed by 298–304; that stretch reads TTTGRPR. Residues R304, 330-332, and 412-414 each bind GTP; these read SID and SVG.

It belongs to the adenylosuccinate synthetase family. Homodimer. Mg(2+) is required as a cofactor.

Its subcellular location is the cytoplasm. The enzyme catalyses IMP + L-aspartate + GTP = N(6)-(1,2-dicarboxyethyl)-AMP + GDP + phosphate + 2 H(+). Its pathway is purine metabolism; AMP biosynthesis via de novo pathway; AMP from IMP: step 1/2. Functionally, plays an important role in the de novo pathway of purine nucleotide biosynthesis. Catalyzes the first committed step in the biosynthesis of AMP from IMP. The sequence is that of Adenylosuccinate synthetase from Bacillus cereus (strain ZK / E33L).